The following is a 594-amino-acid chain: DNA ligase 2 (594 aa).

Position 250 (E250) interacts with ATP. K252 (N6-AMP-lysine intermediate) is an active-site residue. Positions 257, 273, 303, 343, 419, and 425 each coordinate ATP.

The protein belongs to the ATP-dependent DNA ligase family. Mg(2+) is required as a cofactor.

It catalyses the reaction ATP + (deoxyribonucleotide)n-3'-hydroxyl + 5'-phospho-(deoxyribonucleotide)m = (deoxyribonucleotide)n+m + AMP + diphosphate.. Functionally, DNA ligase that seals nicks in double-stranded DNA during DNA replication, DNA recombination and DNA repair. The chain is DNA ligase 2 from Korarchaeum cryptofilum (strain OPF8).